We begin with the raw amino-acid sequence, 173 residues long: Alpha-crystallin A chain (173 aa).

The residue at position 1 (M1) is an N-acetylmethionine. A sHSP domain is found at 52–164 (LFRSVLESGI…SDRPIPVARE (113 aa)). Positions 100, 102, 107, and 154 each coordinate Zn(2+). The segment at 152–173 (TIHSDRPIPVAREEKPTSAPSS) is disordered. The span at 153–167 (IHSDRPIPVAREEKP) shows a compositional bias: basic and acidic residues.

It belongs to the small heat shock protein (HSP20) family. Heteropolymer composed of three CRYAA and one CRYAB subunits. Inter-subunit bridging via zinc ions enhances stability, which is crucial as there is no protein turn over in the lens. Can also form homodimers and homotetramers (dimers of dimers) which serve as the building blocks of homooligomers. Within homooligomers, the zinc-binding motif is created from residues of 3 different molecules. His-100 and Glu-102 from one molecule are ligands of the zinc ion, and His-107 and His-154 residues from additional molecules complete the site with tetrahedral coordination geometry.

It is found in the cytoplasm. The protein localises to the nucleus. In terms of biological role, contributes to the transparency and refractive index of the lens. May act as a chaperone, preventing aggregation of various proteins under a wide range of stress conditions. This Alligator mississippiensis (American alligator) protein is Alpha-crystallin A chain (CRYAA).